An 840-amino-acid polypeptide reads, in one-letter code: Leucine--tRNA ligase (840 aa).

The 'HIGH' region motif lies at 44–55 (PYPSANGLHVGH). The short motif at 617–621 (KMSKS) is the 'KMSKS' region element. Lysine 620 contributes to the ATP binding site.

Belongs to the class-I aminoacyl-tRNA synthetase family.

The protein resides in the cytoplasm. It catalyses the reaction tRNA(Leu) + L-leucine + ATP = L-leucyl-tRNA(Leu) + AMP + diphosphate. This chain is Leucine--tRNA ligase, found in Borreliella afzelii (strain PKo) (Borrelia afzelii).